The chain runs to 388 residues: Succinate--CoA ligase [ADP-forming] subunit beta (388 aa).

The ATP-grasp domain occupies 9–244; that stretch reads KQIFAKYKLP…PSQDDPREAL (236 aa). ATP contacts are provided by residues lysine 46, 53-55, glutamate 99, alanine 102, and glutamate 107; that span reads GRG. Residues asparagine 199 and aspartate 213 each coordinate Mg(2+). Residues asparagine 264 and 321 to 323 contribute to the substrate site; that span reads GIV.

Belongs to the succinate/malate CoA ligase beta subunit family. As to quaternary structure, heterotetramer of two alpha and two beta subunits. Mg(2+) is required as a cofactor.

The catalysed reaction is succinate + ATP + CoA = succinyl-CoA + ADP + phosphate. It catalyses the reaction GTP + succinate + CoA = succinyl-CoA + GDP + phosphate. It participates in carbohydrate metabolism; tricarboxylic acid cycle; succinate from succinyl-CoA (ligase route): step 1/1. Its function is as follows. Succinyl-CoA synthetase functions in the citric acid cycle (TCA), coupling the hydrolysis of succinyl-CoA to the synthesis of either ATP or GTP and thus represents the only step of substrate-level phosphorylation in the TCA. The beta subunit provides nucleotide specificity of the enzyme and binds the substrate succinate, while the binding sites for coenzyme A and phosphate are found in the alpha subunit. The protein is Succinate--CoA ligase [ADP-forming] subunit beta of Glaesserella parasuis serovar 5 (strain SH0165) (Haemophilus parasuis).